Reading from the N-terminus, the 291-residue chain is 4-hydroxy-tetrahydrodipicolinate synthase (291 aa).

T45 contributes to the pyruvate binding site. The active-site Proton donor/acceptor is Y131. The active-site Schiff-base intermediate with substrate is the K159. I202 is a binding site for pyruvate.

This sequence belongs to the DapA family. As to quaternary structure, homotetramer; dimer of dimers.

It localises to the cytoplasm. The enzyme catalyses L-aspartate 4-semialdehyde + pyruvate = (2S,4S)-4-hydroxy-2,3,4,5-tetrahydrodipicolinate + H2O + H(+). It functions in the pathway amino-acid biosynthesis; L-lysine biosynthesis via DAP pathway; (S)-tetrahydrodipicolinate from L-aspartate: step 3/4. Catalyzes the condensation of (S)-aspartate-beta-semialdehyde [(S)-ASA] and pyruvate to 4-hydroxy-tetrahydrodipicolinate (HTPA). This Methanosarcina acetivorans (strain ATCC 35395 / DSM 2834 / JCM 12185 / C2A) protein is 4-hydroxy-tetrahydrodipicolinate synthase.